A 778-amino-acid chain; its full sequence is DISP complex protein LRCH3 (778 aa).

10 LRR repeats span residues 56–79 (AAVTGVLSLSGRKLREFPRGAANH), 81–104 (LTDTTRADLSRNRLSEIPMEACHF), 105–127 (VSLESLNLYQNCIRYIPEAVLNL), 128–150 (QALTFLNISRNQLSTLPVHLCNL), 152–172 (LKVLIASNNKLVSLPEEIGHL), 173–195 (RHLTELDVSCNEIQTVPSQIGNL), 197–218 (ALRDFNVRRNHLLRLPEELAEV), 220–239 (LIRLDFSCNKITVIPVCYRN), 240–264 (LRHLQVITLDNNPLQSPPAQICIKG), and 266–290 (IHIFKYLNIQACKIAPDLPDYERRP). The interval 56-290 (AAVTGVLSLS…PDLPDYERRP (235 aa)) is mediates interaction with DOCK7. Phosphoserine is present on residues S324, S415, and S419. Residues 382–642 (TTEEEENDVK…PATDPTDAIT (261 aa)) are mediates direct interaction with MYO6. The interval 511-536 (QKASHNPQRQQPPGNGECSFPSRRSQ) is disordered. The span at 514–523 (SHNPQRQQPP) shows a compositional bias: polar residues. Phosphoserine is present on residues S608 and S625. The region spanning 645–758 (REEELKLIDQ…VTVQALLELA (114 aa)) is the Calponin-homology (CH) domain. The segment at 758–778 (APPKQPPPQQPQQQQPQLSAV) is disordered. Residues 768–778 (PQQQQPQLSAV) are compositionally biased toward low complexity.

Component of the DOCK7-induced septin displacement/DISP complex, at least composed of DOCK7, LRCH3 and MYO6.

The protein localises to the cytoplasm. Its function is as follows. As part of the DISP complex, may regulate the association of septins with actin and thereby regulate the actin cytoskeleton. The protein is DISP complex protein LRCH3 of Mus musculus (Mouse).